The chain runs to 219 residues: Cyclin-U4-3 (219 aa).

Belongs to the cyclin family. Cyclin U/P subfamily. As to quaternary structure, interacts with CDKA-1. In terms of tissue distribution, expressed at low levels in roots, stems and flowers. Expressed in the shoot apex, leaf primordia and young leaves.

The sequence is that of Cyclin-U4-3 (CYCU4-3) from Arabidopsis thaliana (Mouse-ear cress).